A 469-amino-acid polypeptide reads, in one-letter code: Putative multidrug resistance protein MdtD (469 aa).

A run of 13 helical transmembrane segments spans residues 8–28, 45–65, 68–88, 102–122, 134–154, 161–181, 191–211, 215–235, 263–283, 286–306, 338–358, 392–412, and 426–446; these read LWIVAFGFFMQTLDTTIVNTA, SVIVSYVLTVAVMLPASGWLA, VGVKWVFFSAIILFTLGSLLC, VIQGIGGAMMVPVGRLTVMKI, FVTLPGQIGPLVGPALGGFLV, WIFLINLPVGVVGALATLWLM, FDISGFIMLAIGMATLTLALD, GLGLPPLAIAGLILCGILALA, LIGSMSARIGSGMLPFMTPVF, IGLGFTPFHAGLMMIPMIIGS, LSFPLVALMGWTLLLPIVLFF, MVMQLSMSLGVSTAGILLGVF, and SAFLYSYICMAIIIALPALIF.

Belongs to the major facilitator superfamily. TCR/Tet family.

The protein resides in the cell inner membrane. This Yersinia enterocolitica serotype O:8 / biotype 1B (strain NCTC 13174 / 8081) protein is Putative multidrug resistance protein MdtD.